Reading from the N-terminus, the 463-residue chain is MHLHFTPRQIVEKLDQYIIGQKDAKKAVAVALRNRYRRSKLVENLRDEIAPKNILMIGPTGVGKTEVARRMAKLVGAPFIKVEATKFTEVGYVGRDVESMVRDLVETSVRIVKEEMVVKVQDKAEEQANQRLVEILVPSPEKQSGFKNPLEMLFGGNQNSNQTSDAQEDDEIEKKRQDVERKLAAGLLEDEVISIEVTEQQSSMFDMLQGTGMEQMGMNFQDALGSIMPKKTKKRKLSVKEARKLLTNEEAQRLIDMDEVTQEAVYRAEQLGIIFIDEIDKIAGKQSNSVDVSREGVQRDILPIVEGSNVATKYGSVKTDYILFVAAGAFHMSKPSDLIPELQGRFPIRVELTKLSADDFVKILIEPDNALIKQYTALLATEGIEIEFSDEAIRKIAEIAYQVNQDTDNIGARRLHTVMEKLLEDLSFEASEITLEKITITPQYVEEKLATIAKNKDVSQFIL.

ATP is bound by residues Ile19 and 61–66; that span reads GVGKTE. The interval 154–175 is disordered; sequence FGGNQNSNQTSDAQEDDEIEKK. Polar residues predominate over residues 156–165; that stretch reads GNQNSNQTSD. Asp277, Glu341, and Arg413 together coordinate ATP.

This sequence belongs to the ClpX chaperone family. HslU subfamily. As to quaternary structure, a double ring-shaped homohexamer of HslV is capped on each side by a ring-shaped HslU homohexamer. The assembly of the HslU/HslV complex is dependent on binding of ATP.

Its subcellular location is the cytoplasm. ATPase subunit of a proteasome-like degradation complex; this subunit has chaperone activity. The binding of ATP and its subsequent hydrolysis by HslU are essential for unfolding of protein substrates subsequently hydrolyzed by HslV. HslU recognizes the N-terminal part of its protein substrates and unfolds these before they are guided to HslV for hydrolysis. This Bacillus mycoides (strain KBAB4) (Bacillus weihenstephanensis) protein is ATP-dependent protease ATPase subunit HslU.